A 222-amino-acid chain; its full sequence is Protein-L-isoaspartate O-methyltransferase (222 aa).

The active site involves S70.

This sequence belongs to the methyltransferase superfamily. L-isoaspartyl/D-aspartyl protein methyltransferase family.

The protein localises to the cytoplasm. It catalyses the reaction [protein]-L-isoaspartate + S-adenosyl-L-methionine = [protein]-L-isoaspartate alpha-methyl ester + S-adenosyl-L-homocysteine. In terms of biological role, catalyzes the methyl esterification of L-isoaspartyl residues in peptides and proteins that result from spontaneous decomposition of normal L-aspartyl and L-asparaginyl residues. It plays a role in the repair and/or degradation of damaged proteins. The chain is Protein-L-isoaspartate O-methyltransferase from Jannaschia sp. (strain CCS1).